The sequence spans 304 residues: Acetyl-coenzyme A carboxylase carboxyl transferase subunit beta (304 aa).

The 270-residue stretch at 25–294 folds into the CoA carboxyltransferase N-terminal domain; the sequence is VWTKCDSCGQ…PSVVESKADT (270 aa). Zn(2+) contacts are provided by cysteine 29, cysteine 32, cysteine 48, and cysteine 51. Residues 29–51 form a C4-type zinc finger; it reads CDSCGQVLYRAELERNLEVCPKC.

The protein belongs to the AccD/PCCB family. Acetyl-CoA carboxylase is a heterohexamer composed of biotin carboxyl carrier protein (AccB), biotin carboxylase (AccC) and two subunits each of ACCase subunit alpha (AccA) and ACCase subunit beta (AccD). It depends on Zn(2+) as a cofactor.

It is found in the cytoplasm. It catalyses the reaction N(6)-carboxybiotinyl-L-lysyl-[protein] + acetyl-CoA = N(6)-biotinyl-L-lysyl-[protein] + malonyl-CoA. It participates in lipid metabolism; malonyl-CoA biosynthesis; malonyl-CoA from acetyl-CoA: step 1/1. Its function is as follows. Component of the acetyl coenzyme A carboxylase (ACC) complex. Biotin carboxylase (BC) catalyzes the carboxylation of biotin on its carrier protein (BCCP) and then the CO(2) group is transferred by the transcarboxylase to acetyl-CoA to form malonyl-CoA. This is Acetyl-coenzyme A carboxylase carboxyl transferase subunit beta from Yersinia pseudotuberculosis serotype O:1b (strain IP 31758).